Consider the following 944-residue polypeptide: Bifunctional glutamine synthetase adenylyltransferase/adenylyl-removing enzyme (944 aa).

Residues M1–D440 are adenylyl removase. An adenylyl transferase region spans residues V448 to E944.

Belongs to the GlnE family. The cofactor is Mg(2+).

The enzyme catalyses [glutamine synthetase]-O(4)-(5'-adenylyl)-L-tyrosine + phosphate = [glutamine synthetase]-L-tyrosine + ADP. The catalysed reaction is [glutamine synthetase]-L-tyrosine + ATP = [glutamine synthetase]-O(4)-(5'-adenylyl)-L-tyrosine + diphosphate. Involved in the regulation of glutamine synthetase GlnA, a key enzyme in the process to assimilate ammonia. When cellular nitrogen levels are high, the C-terminal adenylyl transferase (AT) inactivates GlnA by covalent transfer of an adenylyl group from ATP to specific tyrosine residue of GlnA, thus reducing its activity. Conversely, when nitrogen levels are low, the N-terminal adenylyl removase (AR) activates GlnA by removing the adenylyl group by phosphorolysis, increasing its activity. The regulatory region of GlnE binds the signal transduction protein PII (GlnB) which indicates the nitrogen status of the cell. In Proteus mirabilis (strain HI4320), this protein is Bifunctional glutamine synthetase adenylyltransferase/adenylyl-removing enzyme.